Reading from the N-terminus, the 128-residue chain is UPF0102 protein BCG_2919c (128 aa).

Belongs to the UPF0102 family.

In Mycobacterium bovis (strain BCG / Pasteur 1173P2), this protein is UPF0102 protein BCG_2919c.